Consider the following 157-residue polypeptide: Protein PEROXIN-4 (157 aa).

Positions 3 to 153 constitute a UBC core domain; it reads ASRARLFKEY…AQMYTRLAAM (151 aa). Cysteine 90 (glycyl thioester intermediate) is an active-site residue.

Belongs to the ubiquitin-conjugating enzyme family. As to quaternary structure, interacts with PEX22.

The protein localises to the peroxisome membrane. The enzyme catalyses S-ubiquitinyl-[E1 ubiquitin-activating enzyme]-L-cysteine + [E2 ubiquitin-conjugating enzyme]-L-cysteine = [E1 ubiquitin-activating enzyme]-L-cysteine + S-ubiquitinyl-[E2 ubiquitin-conjugating enzyme]-L-cysteine.. It functions in the pathway protein modification; protein ubiquitination. In terms of biological role, required for peroxisome biogenesis. Necessary for the developmental elimination of obsolete peroxisome matrix proteins. May be involved in the ubiquitination of PEX5, targeting it for recycling. Accepts the ubiquitin from the E1 complex and catalyzes its covalent attachment to other proteins. The protein is Protein PEROXIN-4 (PEX4) of Arabidopsis thaliana (Mouse-ear cress).